Reading from the N-terminus, the 318-residue chain is Ribonuclease Z (318 aa).

Zn(2+)-binding residues include His-62, His-64, Asp-66, His-67, His-144, Asp-215, and His-273. The active-site Proton acceptor is Asp-66.

It belongs to the RNase Z family. As to quaternary structure, homodimer. It depends on Zn(2+) as a cofactor.

It carries out the reaction Endonucleolytic cleavage of RNA, removing extra 3' nucleotides from tRNA precursor, generating 3' termini of tRNAs. A 3'-hydroxy group is left at the tRNA terminus and a 5'-phosphoryl group is left at the trailer molecule.. Functionally, zinc phosphodiesterase, which displays some tRNA 3'-processing endonuclease activity. Probably involved in tRNA maturation, by removing a 3'-trailer from precursor tRNA. This is Ribonuclease Z from Prochlorococcus marinus (strain MIT 9313).